The primary structure comprises 643 residues: 3D-(3,5/4)-trihydroxycyclohexane-1,2-dione hydrolase (643 aa).

Residue E65 coordinates thiamine diphosphate. The tract at residues S441–G521 is thiamine pyrophosphate binding. Mg(2+)-binding residues include D492 and N519.

Belongs to the TPP enzyme family. Mg(2+) serves as cofactor. The cofactor is thiamine diphosphate.

The enzyme catalyses 3D-3,5/4-trihydroxycyclohexane-1,2-dione + H2O = 5-deoxy-D-glucuronate + H(+). It participates in polyol metabolism; myo-inositol degradation into acetyl-CoA; acetyl-CoA from myo-inositol: step 3/7. Functionally, involved in the cleavage of the C1-C2 bond of 3D-(3,5/4)-trihydroxycyclohexane-1,2-dione (THcHDO) to yield 5-deoxy-glucuronate (5DG). The protein is 3D-(3,5/4)-trihydroxycyclohexane-1,2-dione hydrolase of Clostridium botulinum (strain Eklund 17B / Type B).